We begin with the raw amino-acid sequence, 496 residues long: Putative ammonium transporter 1 member 5 (496 aa).

11 helical membrane-spanning segments follow: residues 50 to 70, 85 to 105, 131 to 151, 156 to 176, 202 to 222, 246 to 266, 284 to 306, 314 to 334, 336 to 356, 369 to 389, and 422 to 442; these read LLFS…LCAG, VLDA…FAFG, FFLY…GSIA, FVAY…VVSH, FAGS…GALI, LVVL…PGSF, GIGR…TLFG, WNVT…TAGC, VVDP…LIGC, LEAA…VGLF, and LVQI…LFFI. S485 is subject to Phosphoserine.

Belongs to the ammonia transporter channel (TC 1.A.11.2) family.

The protein localises to the membrane. In terms of biological role, involved in ammonium transport. The polypeptide is Putative ammonium transporter 1 member 5 (AMT1-5) (Arabidopsis thaliana (Mouse-ear cress)).